Reading from the N-terminus, the 336-residue chain is Aspartate--ammonia ligase (336 aa).

The protein belongs to the class-II aminoacyl-tRNA synthetase family. AsnA subfamily.

Its subcellular location is the cytoplasm. The enzyme catalyses L-aspartate + NH4(+) + ATP = L-asparagine + AMP + diphosphate + H(+). It participates in amino-acid biosynthesis; L-asparagine biosynthesis; L-asparagine from L-aspartate (ammonia route): step 1/1. The sequence is that of Aspartate--ammonia ligase from Ligilactobacillus salivarius (strain UCC118) (Lactobacillus salivarius).